Here is a 357-residue protein sequence, read N- to C-terminus: DNA replication and repair protein RecF (357 aa).

30-37 (GANGSGKT) contributes to the ATP binding site.

This sequence belongs to the RecF family.

The protein localises to the cytoplasm. The RecF protein is involved in DNA metabolism; it is required for DNA replication and normal SOS inducibility. RecF binds preferentially to single-stranded, linear DNA. It also seems to bind ATP. This is DNA replication and repair protein RecF from Escherichia coli O139:H28 (strain E24377A / ETEC).